The chain runs to 257 residues: Imidazole glycerol phosphate synthase subunit HisF (257 aa).

Residues Asp-12 and Asp-131 contribute to the active site.

The protein belongs to the HisA/HisF family. In terms of assembly, heterodimer of HisH and HisF.

The protein localises to the cytoplasm. It catalyses the reaction 5-[(5-phospho-1-deoxy-D-ribulos-1-ylimino)methylamino]-1-(5-phospho-beta-D-ribosyl)imidazole-4-carboxamide + L-glutamine = D-erythro-1-(imidazol-4-yl)glycerol 3-phosphate + 5-amino-1-(5-phospho-beta-D-ribosyl)imidazole-4-carboxamide + L-glutamate + H(+). It functions in the pathway amino-acid biosynthesis; L-histidine biosynthesis; L-histidine from 5-phospho-alpha-D-ribose 1-diphosphate: step 5/9. Its function is as follows. IGPS catalyzes the conversion of PRFAR and glutamine to IGP, AICAR and glutamate. The HisF subunit catalyzes the cyclization activity that produces IGP and AICAR from PRFAR using the ammonia provided by the HisH subunit. The sequence is that of Imidazole glycerol phosphate synthase subunit HisF from Paraburkholderia xenovorans (strain LB400).